Consider the following 596-residue polypeptide: Fructan 1-exohydrolase w2 (596 aa).

The first 20 residues, M1 to S20, serve as a signal peptide directing secretion. D75 is a catalytic residue. N168, N236, and N248 each carry an N-linked (GlcNAc...) asparagine glycan. An intrachain disulfide couples C446 to C492. Residue N567 is glycosylated (N-linked (GlcNAc...) asparagine).

The protein belongs to the glycosyl hydrolase 32 family.

It catalyses the reaction Hydrolysis of terminal, non-reducing (2-&gt;1)-linked beta-D-fructofuranose residues in fructans.. Its activity is regulated as follows. Inhibited by sucrose. Functionally, hydrolyzes inulin-type beta-(2,1)-fructans, but not beta-(2,1)-linkages in branched fructans. Has low activity against beta-(2,6)-linked fructans. May play a role as a beta-(2,1)-trimmer during graminan biosynthesis. This chain is Fructan 1-exohydrolase w2, found in Triticum aestivum (Wheat).